The following is a 359-amino-acid chain: Putative transposase y4uE (359 aa).

2 disordered regions span residues 1-31 and 318-359; these read MGDG…APGG and HYAH…EEAA.

It belongs to the transposase 9 family.

The protein is Putative transposase y4uE of Sinorhizobium fredii (strain NBRC 101917 / NGR234).